Reading from the N-terminus, the 286-residue chain is MDSPSTTANGWIDEHHQGVRYGLQGRVLVDETSPYQRITVIDSSRYGKGLLLDGCWMTAEHQERHYHESLVHPALCSAAQLERVLVIGGGDGGTARECLRYQDVKHLDMVEIDRRVVELSQKHLPSLGSHAWSDPRLQLNLENGIAWVANATESSYDVILIDGSDPAGPAEGLFNQTFFEHCRRILRPGGVFATQSESPEAFRQVHIDTVRLIRQVFGYADPLYGWVPMYPSGWWSWTFAAIDGPRYRNPLPARAAAISAGCEIWSPRWQQGAFEAIPAFIERELT.

The PABS domain occupies 9–242 (NGWIDEHHQG…GWWSWTFAAI (234 aa)). Glutamine 36 lines the S-methyl-5'-thioadenosine pocket. Positions 67 and 91 each coordinate spermidine. S-methyl-5'-thioadenosine contacts are provided by residues glutamate 111 and 143–144 (NG). Aspartate 162 acts as the Proton acceptor in catalysis. Residue proline 169 participates in S-methyl-5'-thioadenosine binding.

This sequence belongs to the spermidine/spermine synthase family. In terms of assembly, homodimer or homotetramer.

It is found in the cytoplasm. It catalyses the reaction S-adenosyl 3-(methylsulfanyl)propylamine + putrescine = S-methyl-5'-thioadenosine + spermidine + H(+). It functions in the pathway amine and polyamine biosynthesis; spermidine biosynthesis; spermidine from putrescine: step 1/1. Functionally, catalyzes the irreversible transfer of a propylamine group from the amino donor S-adenosylmethioninamine (decarboxy-AdoMet) to putrescine (1,4-diaminobutane) to yield spermidine. This Prochlorococcus marinus (strain MIT 9313) protein is Polyamine aminopropyltransferase.